Consider the following 124-residue polypeptide: Fluoride-specific ion channel FluC (124 aa).

4 helical membrane passes run 1–21, 35–55, 68–88, and 99–119; these read MGVV…RFLL, VGTL…FAYL, LLIT…YESF, and FLAY…LGYI. Residues Gly-75 and Thr-78 each coordinate Na(+).

Belongs to the fluoride channel Fluc/FEX (TC 1.A.43) family.

The protein resides in the cell inner membrane. The enzyme catalyses fluoride(in) = fluoride(out). Na(+) is not transported, but it plays an essential structural role and its presence is essential for fluoride channel function. Functionally, fluoride-specific ion channel. Important for reducing fluoride concentration in the cell, thus reducing its toxicity. The polypeptide is Fluoride-specific ion channel FluC (Aquifex aeolicus (strain VF5)).